We begin with the raw amino-acid sequence, 326 residues long: Putative HTH-type transcriptional regulatory protein MMP0678 (326 aa).

An HTH cro/C1-type domain is found at 128–183 (LRETREKLKISVGELAEVSRVSRKTIYKYEQNEANPSAEVAIKIEEYLDVPLIKGI). The H-T-H motif DNA-binding region spans 139–158 (VGELAEVSRVSRKTIYKYEQ).

This is Putative HTH-type transcriptional regulatory protein MMP0678 from Methanococcus maripaludis (strain DSM 14266 / JCM 13030 / NBRC 101832 / S2 / LL).